The chain runs to 510 residues: Light-independent protochlorophyllide reductase subunit B (510 aa).

Position 36 (Asp36) interacts with [4Fe-4S] cluster. Asp296 (proton donor) is an active-site residue. 431 to 432 (GM) contacts substrate.

It belongs to the ChlB/BchB/BchZ family. In terms of assembly, protochlorophyllide reductase is composed of three subunits; ChlL, ChlN and ChlB. Forms a heterotetramer of two ChlB and two ChlN subunits. It depends on [4Fe-4S] cluster as a cofactor.

It catalyses the reaction chlorophyllide a + oxidized 2[4Fe-4S]-[ferredoxin] + 2 ADP + 2 phosphate = protochlorophyllide a + reduced 2[4Fe-4S]-[ferredoxin] + 2 ATP + 2 H2O. It participates in porphyrin-containing compound metabolism; chlorophyll biosynthesis (light-independent). In terms of biological role, component of the dark-operative protochlorophyllide reductase (DPOR) that uses Mg-ATP and reduced ferredoxin to reduce ring D of protochlorophyllide (Pchlide) to form chlorophyllide a (Chlide). This reaction is light-independent. The NB-protein (ChlN-ChlB) is the catalytic component of the complex. The polypeptide is Light-independent protochlorophyllide reductase subunit B (Synechococcus sp. (strain JA-2-3B'a(2-13)) (Cyanobacteria bacterium Yellowstone B-Prime)).